Here is a 379-residue protein sequence, read N- to C-terminus: Tryptophan--tRNA ligase, mitochondrial (379 aa).

Residues glutamine 42 and 48–51 (HLGN) contribute to the ATP site. The short motif at 43-51 (PTGCFHLGN) is the 'HIGH' region element. L-tryptophan is bound at residue aspartate 184. ATP-binding positions include 196-198 (GDD), valine 235, 244-248 (KMSKS), and lysine 247. A 'KMSKS' region motif is present at residues 244–248 (KMSKS).

This sequence belongs to the class-I aminoacyl-tRNA synthetase family. In terms of assembly, homodimer.

The protein resides in the mitochondrion matrix. It catalyses the reaction tRNA(Trp) + L-tryptophan + ATP = L-tryptophyl-tRNA(Trp) + AMP + diphosphate + H(+). Its function is as follows. Mitochondrial aminoacyl-tRNA synthetase that catalyzes the attachment of tryptophan to tRNA(Trp). This is Tryptophan--tRNA ligase, mitochondrial (MSW1) from Saccharomyces cerevisiae (strain ATCC 204508 / S288c) (Baker's yeast).